A 243-amino-acid polypeptide reads, in one-letter code: 7-carboxy-7-deazaguanine synthase (243 aa).

Substrate-binding positions include 9–11 (IMG) and Arg24. One can recognise a Radical SAM core domain in the interval 15-243 (YIGRRFIFVR…IQMHKYLGML (229 aa)). The [4Fe-4S] cluster site is built by Cys28, Cys32, and Cys35. Thr84 is a binding site for substrate. Gly86 lines the S-adenosyl-L-methionine pocket.

This sequence belongs to the radical SAM superfamily. 7-carboxy-7-deazaguanine synthase family. As to quaternary structure, homodimer. Requires [4Fe-4S] cluster as cofactor. The cofactor is S-adenosyl-L-methionine. Mg(2+) is required as a cofactor.

It catalyses the reaction 6-carboxy-5,6,7,8-tetrahydropterin + H(+) = 7-carboxy-7-deazaguanine + NH4(+). Its pathway is purine metabolism; 7-cyano-7-deazaguanine biosynthesis. Functionally, catalyzes the complex heterocyclic radical-mediated conversion of 6-carboxy-5,6,7,8-tetrahydropterin (CPH4) to 7-carboxy-7-deazaguanine (CDG), a step common to the biosynthetic pathways of all 7-deazapurine-containing compounds. This Methanocaldococcus jannaschii (strain ATCC 43067 / DSM 2661 / JAL-1 / JCM 10045 / NBRC 100440) (Methanococcus jannaschii) protein is 7-carboxy-7-deazaguanine synthase.